A 339-amino-acid chain; its full sequence is Anthranilate phosphoribosyltransferase (339 aa).

Residues Gly-81, 84-85, Thr-89, 91-94, 109-117, and Ser-121 contribute to the 5-phospho-alpha-D-ribose 1-diphosphate site; these read GD, NVST, and KHGNRSVSS. An anthranilate-binding site is contributed by Gly-81. Ser-93 serves as a coordination point for Mg(2+). An anthranilate-binding site is contributed by Asn-112. Anthranilate is bound at residue Arg-167. Asp-226 and Glu-227 together coordinate Mg(2+).

Belongs to the anthranilate phosphoribosyltransferase family. In terms of assembly, homodimer. Mg(2+) serves as cofactor.

It catalyses the reaction N-(5-phospho-beta-D-ribosyl)anthranilate + diphosphate = 5-phospho-alpha-D-ribose 1-diphosphate + anthranilate. The protein operates within amino-acid biosynthesis; L-tryptophan biosynthesis; L-tryptophan from chorismate: step 2/5. Functionally, catalyzes the transfer of the phosphoribosyl group of 5-phosphorylribose-1-pyrophosphate (PRPP) to anthranilate to yield N-(5'-phosphoribosyl)-anthranilate (PRA). The chain is Anthranilate phosphoribosyltransferase from Persephonella marina (strain DSM 14350 / EX-H1).